We begin with the raw amino-acid sequence, 80 residues long: Exodeoxyribonuclease 7 small subunit (80 aa).

Belongs to the XseB family. In terms of assembly, heterooligomer composed of large and small subunits.

Its subcellular location is the cytoplasm. The enzyme catalyses Exonucleolytic cleavage in either 5'- to 3'- or 3'- to 5'-direction to yield nucleoside 5'-phosphates.. Functionally, bidirectionally degrades single-stranded DNA into large acid-insoluble oligonucleotides, which are then degraded further into small acid-soluble oligonucleotides. The sequence is that of Exodeoxyribonuclease 7 small subunit from Halalkalibacterium halodurans (strain ATCC BAA-125 / DSM 18197 / FERM 7344 / JCM 9153 / C-125) (Bacillus halodurans).